The following is a 307-amino-acid chain: Atrochrysone carboxyl ACP thioesterase (307 aa).

Zn(2+) is bound by residues His104, His106, Asp108, and His109. Asp108 (proton donor/acceptor) is an active-site residue.

This sequence belongs to the metallo-beta-lactamase superfamily. It depends on Zn(2+) as a cofactor.

The enzyme catalyses atrochrysone carboxyl-[ACP] + H2O = atrochrysone carboxylate + holo-[ACP] + H(+). It functions in the pathway secondary metabolite biosynthesis. In terms of biological role, atrochrysone carboxyl ACP thioesterase; part of the gene cluster that mediates the biosynthesis of monodictyphenone, a prenyl xanthone derivative. The pathway begins with the synthesis of atrochrysone thioester by the polyketide synthase (PKS) mdpG. The atrochrysone carboxyl ACP thioesterase mdpF then breaks the thioester bond and releases the atrochrysone carboxylic acid from mdpG. The atrochrysone carboxylic acid is then converted to atrochrysone which is further transformed into emodin anthrone. The next step is performed by the anthrone oxygenase mdpH that catalyzes the oxidation of emodinanthrone to emodin. Emodin is further modified to yield monodictyphenone via several steps involving mdpB, mdpC mdpJ, mdpK and mdpL. The short chain dehydrogenase mdpC converts the tautomers of emodin hydroquinone into the 3-hydroxy-3,4-dihydroan-thracen-1(2H)-one derivative. These enzymes with xptA, xptB and xptC are also proposed to be involved in the synthesis of shamixanthone from emodin. Especially, direct reduction of emodin by the short chain dehydrogenase mdpC followed by dehydration catalyzed by the scytalone dehydratase-like protein mdpB gives loss of oxygen and formation of chrysophanol intermediate in two simple steps. This Emericella nidulans (strain FGSC A4 / ATCC 38163 / CBS 112.46 / NRRL 194 / M139) (Aspergillus nidulans) protein is Atrochrysone carboxyl ACP thioesterase.